The primary structure comprises 227 residues: Ubiquitin domain-containing protein 1 (227 aa).

The disordered stretch occupies residues Met-1 to Trp-36. The segment covering Gly-24–Trp-36 has biased composition (basic and acidic residues). Positions Phe-149–Pro-224 constitute a Ubiquitin-like domain.

As to quaternary structure, interacts with UBTD1.

May be involved in the regulation of cellular senescence through a positive feedback loop with TP53. Is a TP53 downstream target gene that increases the stability of TP53 protein by promoting the ubiquitination and degradation of MDM2. The chain is Ubiquitin domain-containing protein 1 (UBTD1) from Bos taurus (Bovine).